We begin with the raw amino-acid sequence, 114 residues long: NADH-quinone oxidoreductase subunit K 2 (114 aa).

3 consecutive transmembrane segments (helical) span residues 1 to 21 (MIVPFGHVLLLAGALFGLGVF), 29 to 49 (LIMIVLGVEIMLNAASIAFIG), and 62 to 82 (FVLFILAVAATEVSIGLAIIV).

It belongs to the complex I subunit 4L family. In terms of assembly, NDH-1 is composed of 14 different subunits. Subunits NuoA, H, J, K, L, M, N constitute the membrane sector of the complex.

Its subcellular location is the cell inner membrane. It carries out the reaction a quinone + NADH + 5 H(+)(in) = a quinol + NAD(+) + 4 H(+)(out). In terms of biological role, NDH-1 shuttles electrons from NADH, via FMN and iron-sulfur (Fe-S) centers, to quinones in the respiratory chain. The immediate electron acceptor for the enzyme in this species is believed to be ubiquinone. Couples the redox reaction to proton translocation (for every two electrons transferred, four hydrogen ions are translocated across the cytoplasmic membrane), and thus conserves the redox energy in a proton gradient. In Syntrophobacter fumaroxidans (strain DSM 10017 / MPOB), this protein is NADH-quinone oxidoreductase subunit K 2.